Consider the following 411-residue polypeptide: Immunity-related GTPase family M protein (411 aa).

The interval 1-21 (MKPSHKSCEAAPLLPKMPETS) is disordered. An IRG-type G domain is found at 77-253 (IPVSIFVTGD…PELRNTLQTD (177 aa)). GTP is bound by residues 86–93 (DSGNGMSS), 111–115 (TGVVR), and 193–195 (KLD). Ser204 is modified (phosphoserine). 234 to 236 (SNL) lines the GTP pocket. Lys272 is covalently cross-linked (Glycyl lysine isopeptide (Lys-Gly) (interchain with G-Cter in ubiquitin)). Residues 352-376 (KLRLMTCTTVNALFCLFKFLPCLCH) form an alpha-K amphipathic helix region.

Belongs to the TRAFAC class dynamin-like GTPase superfamily. IRG family. As to quaternary structure, interacts with ULK1; promoting the coassembly of ULK1 and BECN1. Interacts with BECN1; enhancing BECN1-interacting partners and influencing the composition of the BECN1 complex. Interacts with ATG16L1. Interacts with NOD2; promoting Irgm 'Lys-63'-linked polyubiquitination, which is required for interactions with the core autophagy factors. Interacts with STX17; promoting STX17 recruitment to autophagosomes. Interacts with ATG8 proteins (GABARAP, GABARAPL1, GABARAPL2, MAP1LC3A, MAP1LC3B and MAP1LC3C); promoting STX17 recruitment to autophagosomes. Interacts with TFEB; promoting association between TFEB and PPP3CB and TFEB dephosphorylation. Interacts with PPP3CB; promoting association between TFEB and PPP3CB and TFEB dephosphorylation. Interacts with NLRP3; preventing NLRP3 inflammasome assembly and promoting SQSTM1/p62-dependent autophagic degradation of NLRP3. Interacts with CGAS; promoting SQSTM1/p62-dependent autophagic degradation of CGAS. Interacts with RIGI/RIG-I; promoting SQSTM1/p62-dependent autophagic degradation of RIGI/RIG-I. Interacts with NOD1; promoting SQSTM1/p62-dependent autophagic degradation of RIGI/RIG-I. Interacts with NOD2; promoting SQSTM1/p62-dependent autophagic degradation of RIGI/RIG-I. Interacts with RIPK2; promoting SQSTM1/p62-dependent autophagic degradation of RIGI/RIG-I. Interacts with PIK3CA. Post-translationally, palmitoylated on C-terminal Cys residues. Palmitoylation, together with the alpha-K amphipathic helix, which binds phosphatidylinositol, mediate binding to membranes. Ubiquitinated via 'Lys-63'-linked polyubiquitination in a NOD2-dependent process. 'Lys-63'-linked polyubiquitination is required for interactions with the core autophagy factors. Ubiquitination at Lys-272 by the DCX(WDR77) complex, also named CLR4(WDR77) complex, in intestinal cells, leading to its degradation by the proteasome.

The protein localises to the golgi apparatus membrane. The protein resides in the cell membrane. Its subcellular location is the cytoplasmic vesicle. It is found in the phagosome membrane. It localises to the autophagosome membrane. The protein localises to the lysosome membrane. The protein resides in the late endosome membrane. Its subcellular location is the mitochondrion membrane. It is found in the cell projection. It localises to the phagocytic cup. It catalyses the reaction GTP + H2O = GDP + phosphate + H(+). In terms of biological role, immunity-related GTPase that plays important roles in innate immunity and inflammatory response. Acts as a dynamin-like protein that binds to intracellular membranes and promotes remodeling and trafficking of those membranes. Required for clearance of acute protozoan and bacterial infections by interacting with autophagy and lysosome regulatory proteins, thereby promoting the fusion of phagosomes with lysosomes for efficient degradation of cargo including microbes. Regulates selective autophagy, including xenophagy and mitophagy, both directly and indirectly. Directly regulates autophagy by acting as a molecular adapter that promotes the coassembly of the core autophagy machinery to mediate antimicrobial defense: Irgm (1) activates AMPK, which in turn phosphorylates ULK1 and BECN1 to induce autophagy, (2) promotes the coassembly of ULK1 and BECN1, enhancing BECN1-interacting partners and (3) influences the composition of the BECN1 complex, by competing with the negative regulators BCL2 and RUBCN, to trigger autophagy. Also activates autophagy by promoting recruitment of STX17 to autophagosomes. In collaboration with ATG8 proteins, regulate lysosomal biogenesis, a fundamental process for any autophagic pathway, by promoting TFEB dephosphorylation. Also modulates autophagy by assisting with autophagosome formation and preventing lysosomal deacidification. Regulates autophagy by affecting mitochondrial fusion and fission. Also involved in M1 macrophage activation for the production of proinflammatory cytokines. While activating autophagy, acts as a key negative regulator of the inflammatory and interferon responses both by (1) promoting mitophagy and (2) mediating autophagy-dependent degradation of effectors of the inflammatory response. Promotes degradation of damaged and IFNG/IFN-gamma-stressed mitochondria via mitophagy, preventing cytosolic release of ligands that activate inflammation. Negatively regulates interferon-signaling in hematopoietic stem cells, preserving hematopoietic stem cell number and function. Promotes expansion of activated CD4(+) T-cells by inhibiting IFNG/IFN-gamma signaling, thereby preventing Ifng-mediated cell death of CD4(+) T-cells. Acts as a suppressor of inflammation by promoting recruitment of inflammation effectors, such as CGAS, RIGI/RIG-I and NLRP3, to autophagosome membranes, leading to their SQSTM1/p62-dependent autophagic degradation. Also directly inhibits assembly of the NLRP3 inflammasome by preventing the association between NLRP3 and PYCARD. Acts as a negative regulator of antiviral innate immune response by suppressing the RIPK2-dependent pro-inflammatory response: mediates recruitment of RIPosomes, composed of RIPK2 and NOD1 or NOD2, to autophagosome membranes, promoting their SQSTM1/p62-dependent autophagic degradation. This Rattus norvegicus (Rat) protein is Immunity-related GTPase family M protein.